A 123-amino-acid polypeptide reads, in one-letter code: MIHSIGTDIVYIPRILRILQKYGEKFLNRIYTEKEIELSRKYNSQEMRARYFAKRFAAKEAFVKARGSGQGITMKDIEIYNDVRGKPYLTVSKDFISKIHLSLSDDGDYATAFVVICVYSSHR.

The Mg(2+) site is built by D8 and E60.

This sequence belongs to the P-Pant transferase superfamily. AcpS family. It depends on Mg(2+) as a cofactor.

It is found in the cytoplasm. The enzyme catalyses apo-[ACP] + CoA = holo-[ACP] + adenosine 3',5'-bisphosphate + H(+). Functionally, transfers the 4'-phosphopantetheine moiety from coenzyme A to a Ser of acyl-carrier-protein. The protein is Holo-[acyl-carrier-protein] synthase of Wolbachia pipientis wMel.